We begin with the raw amino-acid sequence, 465 residues long: Probable citrate synthase, mitochondrial (465 aa).

Residues His-303, His-349, and Asp-404 contribute to the active site.

It belongs to the citrate synthase family. In terms of assembly, homodimer.

It is found in the mitochondrion matrix. The enzyme catalyses oxaloacetate + acetyl-CoA + H2O = citrate + CoA + H(+). The protein operates within carbohydrate metabolism; tricarboxylic acid cycle; isocitrate from oxaloacetate: step 1/2. The protein is Probable citrate synthase, mitochondrial of Glossina morsitans morsitans (Savannah tsetse fly).